A 761-amino-acid chain; its full sequence is Mitochondrial inner membrane m-AAA protease component YTA10 (761 aa).

Residues methionine 1 to glutamate 115 are Mitochondrial matrix-facing. The disordered stretch occupies residues serine 67–arginine 101. Composition is skewed to basic and acidic residues over residues asparagine 72 to glycine 82 and asparagine 91 to arginine 101. Residues phenylalanine 116–serine 136 traverse the membrane as a helical segment. At serine 137 to serine 223 the chain is on the mitochondrial intermembrane side. The chain crosses the membrane as a helical span at residues proline 224–isoleucine 244. The Mitochondrial matrix portion of the chain corresponds to threonine 245 to asparagine 761. The ATP site is built by valine 290, alanine 291, threonine 332, glycine 333, lysine 334, threonine 335, leucine 336, and histidine 472. Histidine 558 is a Zn(2+) binding site. Glutamate 559 is a catalytic residue. Residues histidine 562 and aspartate 634 each coordinate Zn(2+).

This sequence in the N-terminal section; belongs to the AAA ATPase family. It in the C-terminal section; belongs to the peptidase M41 family. As to quaternary structure, component of the 850 kDa m-AAA protease complex, a heterohexamer composed of YTA12/RCA1 and YTA10/AFG3. Associates with the prohibitin complex, composed of PHB1 and PHB2, inhibiting the activity of the m-AAA protease complex. The cofactor is Zn(2+).

The protein resides in the mitochondrion inner membrane. It catalyses the reaction ATP + H2O = ADP + phosphate + H(+). With respect to regulation, ATP hydrolysis is coordinated within m-AAA protease ring complexes: ATP-binding to YTA10/AFG3 inhibits ATP hydrolysis by the neighboring subunit YTA12/RCA1, leading to coordinated ATP hydrolysis within the AAA ATPase ring. Functionally, catalytic component of the m-AAA protease, a protease that plays a key role in proteostasis of inner mitochondrial membrane proteins. YTA10/AFG3 possesses both ATPase and protease activities: the ATPase activity is required to unfold substrates, threading them into the internal proteolytic cavity for hydrolysis into small peptide fragments. The complex is necessary for the assembly of mitochondrial respiratory chain and ATPase complexes. The m-AAA protease carries out protein quality control in the inner membrane of the mitochondria by mediating degradation of mistranslated or misfolded polypeptides. It also mediates protein maturation of the mitochondrial ribosomal subunit MRPL32/bL32m by catalyzing the cleavage of the presequence of MRPL32/bL32m prior to assembly into the mitochondrial ribosome. Promotes maturation of cytochrome c peroxidase (CCP1) by acting as a membrane protein dislocase via its ATPase activity: pulls the CCP1 transmembrane to the matrix prior to processing by the rhomboid protease PCP1. The membrane protein dislocase activity is also required to dislocate moderately hydrophobic transmembrane segments from the membrane. This is Mitochondrial inner membrane m-AAA protease component YTA10 from Saccharomyces cerevisiae (strain ATCC 204508 / S288c) (Baker's yeast).